Reading from the N-terminus, the 270-residue chain is Probable 6-oxopurine nucleoside phosphorylase (270 aa).

Phosphate contacts are provided by residues Ser10 and 48–49 (RH). Met191 contacts substrate. Phosphate is bound at residue Thr192. 215 to 217 (NYA) is a substrate binding site.

Belongs to the PNP/MTAP phosphorylase family. MTAP subfamily. Homohexamer. Dimer of a homotrimer.

It carries out the reaction a purine D-ribonucleoside + phosphate = a purine nucleobase + alpha-D-ribose 1-phosphate. Its pathway is purine metabolism; purine nucleoside salvage. Purine nucleoside phosphorylase which is highly specific for 6-oxopurine nucleosides. Cleaves guanosine or inosine to respective bases and sugar-1-phosphate molecules. Involved in purine salvage. The protein is Probable 6-oxopurine nucleoside phosphorylase of Korarchaeum cryptofilum (strain OPF8).